We begin with the raw amino-acid sequence, 437 residues long: F-box protein At3g62430 (437 aa).

Positions 1 to 49 constitute an F-box domain; sequence MDRISNLPDGVIYRVISLLSTKEATCLKYTSKNWLNLVTIIPIAVFVDS.

This chain is F-box protein At3g62430, found in Arabidopsis thaliana (Mouse-ear cress).